A 480-amino-acid polypeptide reads, in one-letter code: Cysteine--tRNA ligase (480 aa).

Residue cysteine 31 coordinates Zn(2+). Positions 33-43 (PTVYDSSHIGH) match the 'HIGH' region motif. Cysteine 211, histidine 236, and glutamate 240 together coordinate Zn(2+). A 'KMSKS' region motif is present at residues 269–273 (KMSKS). Lysine 272 contributes to the ATP binding site.

This sequence belongs to the class-I aminoacyl-tRNA synthetase family. It depends on Zn(2+) as a cofactor.

The enzyme catalyses tRNA(Cys) + L-cysteine + ATP = L-cysteinyl-tRNA(Cys) + AMP + diphosphate. The protein is Cysteine--tRNA ligase of Encephalitozoon cuniculi (strain GB-M1) (Microsporidian parasite).